The sequence spans 248 residues: Pulmonary surfactant-associated protein A (248 aa).

The signal sequence occupies residues 1 to 20 (MSLCSLAFTLFLTVVAGIKC). Residues 28 to 100 (GSPGIPGAPG…PGERGLPGFP (73 aa)) enclose the Collagen-like domain. 4-hydroxyproline occurs at positions 30, 33, 36, 42, 54, 57, 63, 67, 70, and 76. The segment at 31 to 99 (GIPGAPGNHG…EPGERGLPGF (69 aa)) is disordered. Residues 42–51 (PGRDGRDGVK) are compositionally biased toward basic and acidic residues. The segment covering 54–65 (PGPPGPMGPPGG) has biased composition (pro residues). Residues 69-82 (LPGRDGLPGAPGAP) show a composition bias toward low complexity. Over residues 84–93 (ERGDKGEPGE) the composition is skewed to basic and acidic residues. The C-type lectin domain occupies 133-248 (SVGDKVFSTN…LQYRLAVCEF (116 aa)). Cystine bridges form between cysteine 155-cysteine 246 and cysteine 224-cysteine 238. The N-linked (GlcNAc...) asparagine glycan is linked to asparagine 207. Positions 215, 217, 234, and 235 each coordinate Ca(2+).

This sequence belongs to the SFTPA family. As to quaternary structure, oligomeric complex of 6 set of homotrimers.

The protein localises to the secreted. It localises to the extracellular space. Its subcellular location is the extracellular matrix. The protein resides in the surface film. In presence of calcium ions, it binds to surfactant phospholipids and contributes to lower the surface tension at the air-liquid interface in the alveoli of the mammalian lung and is essential for normal respiration. Enhances the expression of MYO18A/SP-R210 on alveolar macrophages. The sequence is that of Pulmonary surfactant-associated protein A (Sftpa1) from Rattus norvegicus (Rat).